The following is a 124-amino-acid chain: Calvin cycle protein CP12-1, chloroplastic (124 aa).

Residues 1-47 (MTTIAAAGLNVATPRVVVRPVARVLGPVRLNYPWKFGSMKRMVVVKA) constitute a chloroplast transit peptide. 2 cysteine pairs are disulfide-bonded: cysteine 68–cysteine 77 and cysteine 110–cysteine 119. Residues 90–124 (AASHARDKKKAGGSDPLEEYCNDNPETDECRTYDN) form a disordered region. Over residues 105-116 (PLEEYCNDNPET) the composition is skewed to acidic residues.

It belongs to the CP12 family. As to quaternary structure, monomer. Component of a complex that contains two dimers of PRK, two tetramers of GAPDH and CP12. CP12 associates with GAPDH, causing its conformation to change. This GAPDH/CP12 complex binds PRK to form a half-complex (one unit). This unit probably dimerizes due partially to interactions between the enzymes of each unit. Contains two disulfide bonds; only the oxidized protein, with two disulfide bonds, is active in complex formation. The C-terminal disulfide is involved in the interaction with GAPDH and the N-terminal disulfide mediates the binding of PRK with this binary complex. As to expression, mostly expressed in flowers, hypocotyl, cotyledons, leaves, stems, and flower stalks. Barely detectable in roots and siliques. Present in root tips and lateral roots. Accumulates in the cotyledons of etiolated seedlings.

It localises to the plastid. It is found in the chloroplast. In terms of biological role, acts as a linker essential in the assembly of a core complex of PRK/GAPDH. Coordinates the reversible inactivation of chloroplast enzymes GAPDH and PRK during darkness in photosynthetic tissues. This is Calvin cycle protein CP12-1, chloroplastic (CP12-1) from Arabidopsis thaliana (Mouse-ear cress).